Consider the following 95-residue polypeptide: Large ribosomal subunit protein uL23 (95 aa).

It belongs to the universal ribosomal protein uL23 family. Part of the 50S ribosomal subunit. Contacts protein L29, and trigger factor when it is bound to the ribosome.

Its function is as follows. One of the early assembly proteins it binds 23S rRNA. One of the proteins that surrounds the polypeptide exit tunnel on the outside of the ribosome. Forms the main docking site for trigger factor binding to the ribosome. The protein is Large ribosomal subunit protein uL23 of Deinococcus deserti (strain DSM 17065 / CIP 109153 / LMG 22923 / VCD115).